The chain runs to 132 residues: Small ribosomal subunit protein uS11 (132 aa).

The protein belongs to the universal ribosomal protein uS11 family. In terms of assembly, part of the 30S ribosomal subunit. Interacts with proteins S7 and S18. Binds to IF-3.

Functionally, located on the platform of the 30S subunit, it bridges several disparate RNA helices of the 16S rRNA. Forms part of the Shine-Dalgarno cleft in the 70S ribosome. The sequence is that of Small ribosomal subunit protein uS11 from Alkaliphilus metalliredigens (strain QYMF).